We begin with the raw amino-acid sequence, 95 residues long: Small ribosomal subunit protein bS6 (95 aa).

It belongs to the bacterial ribosomal protein bS6 family.

Binds together with bS18 to 16S ribosomal RNA. The protein is Small ribosomal subunit protein bS6 of Corynebacterium glutamicum (strain ATCC 13032 / DSM 20300 / JCM 1318 / BCRC 11384 / CCUG 27702 / LMG 3730 / NBRC 12168 / NCIMB 10025 / NRRL B-2784 / 534).